The following is a 970-amino-acid chain: ATP-dependent DNA helicase DDX11 (970 aa).

One can recognise a Helicase ATP-binding domain in the interval 9–445 (GAIHFPFPFT…KNLMYLKQIL (437 aa)). 44-51 (SPTGTGKS) contributes to the ATP binding site. A Phosphoserine modification is found at S262. Residues C267 and C285 each coordinate [4Fe-4S] cluster. The segment covering 289-304 (QRSRHEKKKGAEEEKP) has biased composition (basic and acidic residues). The interval 289-312 (QRSRHEKKKGAEEEKPKRRRQEKQ) is disordered. The [4Fe-4S] cluster site is built by C315 and C350. The short motif at 393-396 (DEAH) is the DEAH box element. The segment at 818 to 849 (TLSPRPGTPREGSGGEPVHEGRQPVHRQGHQA) is disordered.

This sequence belongs to the DEAD box helicase family. DEAH subfamily. DDX11/CHL1 sub-subfamily. Associates with the CTF18-RFC complex. Associates with a cohesin complex composed of RAD21, SMC1 proteins and SMC3. Interacts with CHTF18. Interacts with DSCC1. Interacts with FEN1; this interaction is direct and increases flap endonuclease activity of FEN1. Interacts with PCNA. Interacts with POLR1A and UBTF. Interacts with RAD21, SMC1 proteins and SMC3. Interacts with RFC2. Interacts with TIMELESS; this interaction increases recruitment of both proteins onto chromatin in response to replication stress induction by hydroxyurea. As to quaternary structure, (Microbial infection) Interacts with bovine papillomavirus type 1 regulatory protein E2; this interaction stimulates the recruitment of E2 onto mitotic chromosomes. The cofactor is Mg(2+). Requires [4Fe-4S] cluster as cofactor. As to expression, expressed in melanoma cells. Not detected in epidermal melanocytes of normal skin (at protein level). Highly expressed in spleen, B-cells, thymus, testis, ovary, small intestine and pancreas. Very low expression seen in brain. Expressed in dividing cells and/or cells undergoing high levels of recombination. No expression detected in cells signaled to terminally differentiate. Expressed weakly in keratinocytes.

Its subcellular location is the nucleus. It is found in the nucleolus. The protein resides in the cytoplasm. The protein localises to the cytoskeleton. It localises to the spindle pole. Its subcellular location is the midbody. It is found in the microtubule organizing center. The protein resides in the centrosome. The protein localises to the chromosome. The enzyme catalyses Couples ATP hydrolysis with the unwinding of duplex DNA at the replication fork by translocating in the 5'-3' direction. This creates two antiparallel DNA single strands (ssDNA). The leading ssDNA polymer is the template for DNA polymerase III holoenzyme which synthesizes a continuous strand.. The catalysed reaction is ATP + H2O = ADP + phosphate + H(+). ATPase activity is stimulated by high magnesium salt levels (up to a 0.1 M), and potassium salts (glutamate, chloride or acetate) are more effective than the corresponding sodium salts. ATPase activity is enhanced by the long non-coding RNA (lncRNA) cohesion regulator noncoding RNA (CONCR). Double-stranded DNA helicase activity is maximal with magnesium ions at low concentrations (0.5-1 mM) whereas is markedly inhibited at higher levels (5 mM and above). Double-stranded DNA helicase activity is stimulated by 25-50 mM potassium acetate, stimulated to a lesser extent by 25 mM of ammonium acetate, and markedly inhibited by sodium acetate. Its function is as follows. DNA-dependent ATPase and ATP-dependent DNA helicase that participates in various functions in genomic stability, including DNA replication, DNA repair and heterochromatin organization as well as in ribosomal RNA synthesis. Its double-stranded DNA helicase activity requires either a minimal 5'-single-stranded tail length of approximately 15 nt (flap substrates) or 10 nt length single-stranded gapped DNA substrates of a partial duplex DNA structure for helicase loading and translocation along DNA in a 5' to 3' direction. The helicase activity is capable of displacing duplex regions up to 100 bp, which can be extended up to 500 bp by the replication protein A (RPA) or the cohesion CTF18-replication factor C (Ctf18-RFC) complex activities. Also shows ATPase- and helicase activities on substrates that mimic key DNA intermediates of replication, repair and homologous recombination reactions, including forked duplex, anti-parallel G-quadruplex and three-stranded D-loop DNA molecules. Plays a role in DNA double-strand break (DSB) repair at the DNA replication fork during DNA replication recovery from DNA damage. Recruited with TIMELESS factor upon DNA-replication stress response at DNA replication fork to preserve replication fork progression, and hence ensure DNA replication fidelity. Also cooperates with TIMELESS factor during DNA replication to regulate proper sister chromatid cohesion and mitotic chromosome segregation. Stimulates 5'-single-stranded DNA flap endonuclease activity of FEN1 in an ATP- and helicase-independent manner; and hence it may contribute in Okazaki fragment processing at DNA replication fork during lagging strand DNA synthesis. Its ability to function at DNA replication fork is modulated by its binding to long non-coding RNA (lncRNA) cohesion regulator non-coding RNA DDX11-AS1/CONCR, which is able to increase both DDX11 ATPase activity and binding to DNA replicating regions. Also plays a role in heterochromatin organization. Involved in rRNA transcription activation through binding to active hypomethylated rDNA gene loci by recruiting UBTF and the RNA polymerase Pol I transcriptional machinery. Plays a role in embryonic development and prevention of aneuploidy. Involved in melanoma cell proliferation and survival. Associates with chromatin at DNA replication fork regions. Binds to single- and double-stranded DNAs. (Microbial infection) Required for bovine papillomavirus type 1 regulatory protein E2 loading onto mitotic chromosomes during DNA replication for the viral genome to be maintained and segregated. The polypeptide is ATP-dependent DNA helicase DDX11 (Homo sapiens (Human)).